Consider the following 1033-residue polypeptide: SIT4-associating protein SAP190 (1033 aa).

3 disordered regions span residues 32 to 82, 147 to 213, and 768 to 1033; these read DQDD…TTES, PEII…QVET, and FGND…KEAF. Basic and acidic residues predominate over residues 158–170; that stretch reads ILIERDRKDKKED. The span at 171–182 shows a compositional bias: acidic residues; that stretch reads AEEGGDSEETTN. Residues 183–195 show a composition bias toward basic and acidic residues; that stretch reads DSDHDSGDERSVD. Serine 774 carries the post-translational modification Phosphoserine. Acidic residues-rich tracts occupy residues 784-793 and 825-838; these read SEDIIGDTEG and ENEE…EYSD. Serine 857, serine 862, and serine 892 each carry phosphoserine. The span at 858-879 shows a compositional bias: basic and acidic residues; it reads DDGKSKSAESEFTDKISEHRDG. Residues 909–924 are compositionally biased toward polar residues; that stretch reads SRSQPSDPKLQDQNIF. Residues 932-944 show a composition bias toward acidic residues; that stretch reads GVGDDDDYMDPND. Threonine 990 carries the post-translational modification Phosphothreonine. The residue at position 991 (serine 991) is a Phosphoserine. The span at 1000–1018 shows a compositional bias: acidic residues; sequence ISSDEEDSEDEDEENDMGN.

It belongs to the SAPS family. As to quaternary structure, associates with the SIT4 protein phosphatase catalytic subunit in a cell-cycle-dependent manner. Post-translationally, hyperphosphorylated in the absence of SIT4.

Its subcellular location is the cytoplasm. In terms of biological role, positive regulator of protein phosphatase SIT4. Involved in the general amino acid control (GAAC) response regulated by TOR. Involved in the dephosphorylation of the elongator complex subunit IKI3. This is SIT4-associating protein SAP190 (SAP190) from Saccharomyces cerevisiae (strain ATCC 204508 / S288c) (Baker's yeast).